Consider the following 331-residue polypeptide: Nucleotide sugar transporter SLC35B4 (331 aa).

11 helical membrane-spanning segments follow: residues 4 to 24 (ALAV…LELL), 30 to 50 (GCGN…GFLF), 59 to 79 (PAIP…VSVV), 92 to 112 (LHMI…IIIL), 117 to 137 (SIFK…CTFM), 153 to 173 (GFQA…ALLM), 201 to 221 (ALPL…AVLF), 229 to 249 (IPGI…NIIT), 251 to 267 (YVCI…CASL), 268 to 288 (TVTL…ILYF), and 291 to 311 (PFTL…LMYT). Positions 326–331 (KDNKKN) match the Mediates endoplasmic reticulum retention motif.

The protein belongs to the nucleotide-sugar transporter family. SLC35B subfamily.

It localises to the endoplasmic reticulum membrane. The enzyme catalyses UDP-N-acetyl-alpha-D-glucosamine(in) + UDP-alpha-D-glucuronate(out) = UDP-N-acetyl-alpha-D-glucosamine(out) + UDP-alpha-D-glucuronate(in). It carries out the reaction UDP-alpha-D-xylose(in) + UDP-alpha-D-glucuronate(out) = UDP-alpha-D-xylose(out) + UDP-alpha-D-glucuronate(in). Antiporter that transports nucleotide sugars across the endoplasmic reticulum (ER) membrane in exchange for another nucleotide sugar. May couple UDP-alpha-D-glucuronate (UDP-GlcA) or UDP-alpha-D-xylose (UDP-Xyl) efflux to UDP-alpha-D-glucuronate (UDP-GlcA) influx into the ER lumen, which in turn stimulates glucuronidation and excretion of endobiotics and xenobiotics. This chain is Nucleotide sugar transporter SLC35B4 (SLC35B4), found in Macaca fascicularis (Crab-eating macaque).